Consider the following 137-residue polypeptide: Probable 4-amino-4-deoxy-L-arabinose-phosphoundecaprenol flippase subunit ArnF (137 aa).

Residues 1–3 (MNA) are Cytoplasmic-facing. Residues 4–24 (LRGWLAALGSVLLASAAQLGM) form a helical membrane-spanning segment. The Periplasmic portion of the chain corresponds to 25–44 (RWGMSRLPLPEAWAGQTPER). A helical membrane pass occupies residues 45–65 (AALLAVALAVAAYAASLLCWL). The Cytoplasmic portion of the chain corresponds to 66–76 (AALRHLPLGRA). Residues 77–97 (YSLLSASYALVYLLAASLPAF) traverse the membrane as a helical segment. Residues 98–100 (DET) are Periplasmic-facing. The chain crosses the membrane as a helical span at residues 101-121 (FSTSKTLGVGLVVLGVLTVNA). The Cytoplasmic segment spans residues 122-137 (RRTAAAPAHHPSRKAP).

This sequence belongs to the ArnF family. Heterodimer of ArnE and ArnF.

The protein resides in the cell inner membrane. It functions in the pathway bacterial outer membrane biogenesis; lipopolysaccharide biosynthesis. In terms of biological role, translocates 4-amino-4-deoxy-L-arabinose-phosphoundecaprenol (alpha-L-Ara4N-phosphoundecaprenol) from the cytoplasmic to the periplasmic side of the inner membrane. The sequence is that of Probable 4-amino-4-deoxy-L-arabinose-phosphoundecaprenol flippase subunit ArnF from Pseudomonas aeruginosa (strain ATCC 15692 / DSM 22644 / CIP 104116 / JCM 14847 / LMG 12228 / 1C / PRS 101 / PAO1).